A 246-amino-acid chain; its full sequence is Large ribosomal subunit protein uL30-like 1 (246 aa).

Residue serine 54 is modified to Phosphoserine.

The protein belongs to the universal ribosomal protein uL30 family.

The polypeptide is Large ribosomal subunit protein uL30-like 1 (Rpl7l1) (Mus musculus (Mouse)).